The sequence spans 223 residues: ATP synthase subunit a 2 (223 aa).

Helical transmembrane passes span 17–37 (VAITRPVVTTWVIMAALALVC), 77–97 (FLPLLGTLIIFLVVANLSGVL), 106–126 (KIETPAALALIVFFSVHYFGV), 173–193 (FIIGLVVALAGLFVPIPLMAL), and 195–215 (ILVGLVQAYIFTVLATVFIGA).

It belongs to the ATPase A chain family. As to quaternary structure, F-type ATPases have 2 components, CF(1) - the catalytic core - and CF(0) - the membrane proton channel. CF(1) has five subunits: alpha(3), beta(3), gamma(1), delta(1), epsilon(1). CF(0) has four main subunits: a, b, b' and c.

The protein resides in the cell inner membrane. Its function is as follows. Key component of the proton channel; it plays a direct role in the translocation of protons across the membrane. The chain is ATP synthase subunit a 2 from Bradyrhizobium sp. (strain BTAi1 / ATCC BAA-1182).